A 76-amino-acid chain; its full sequence is Waprin-Rha1 (76 aa).

The signal sequence occupies residues 1–24 (MQARVFLLLLGVILLGMMGPMVSA). Residues 25–75 (QDGKAGSCPDVNQPIPPLGVCKTTCATDSNCPDIQKCCKNGCGHMSCTRPS) form the WAP domain. Intrachain disulfides connect Cys-32–Cys-62, Cys-45–Cys-66, Cys-49–Cys-61, and Cys-55–Cys-71.

This sequence belongs to the venom waprin family. Expressed by the venom gland.

The protein resides in the secreted. Functionally, damages membranes of susceptible bacteria. Has no hemolytic activity. Not toxic to mice. Does not inhibit the proteinases elastase and cathepsin G. In Rhabdophis tigrinus tigrinus (Tiger keelback snake), this protein is Waprin-Rha1.